Reading from the N-terminus, the 212-residue chain is Actin-depolymerizing factor 1, isoforms a/b (212 aa).

Positions 3–159 constitute an ADF-H domain; sequence SGVMVDPDVQ…SHKELLNNCP (157 aa).

It belongs to the actin-binding proteins ADF family. Interacts with F-actin.

In terms of biological role, depolymerizes growing actin filaments in muscle cells; required for the assembly of actin filaments into the functional contractile myofilament lattice of muscle. Competes with unc-87 for actin binding and inhibits the actin-bundling activity of unc-87. The chain is Actin-depolymerizing factor 1, isoforms a/b from Caenorhabditis elegans.